Here is a 477-residue protein sequence, read N- to C-terminus: MKILFVAAEGAPFSKTGGLGDVIGALPKSLVKAGHEVAVILPYYDMVEAKFGNQIEDVLHFEVSVGWRRQYCGIKKTVLNGVTFYFIDNQYYFFRGHVYGDFDDGERFAFFQLAAIEAMERIDFIPDLLHVHDYHTAMIPFLLKEKYCWIQAYEDIETVLTIHNLEFQGQFSEGMLGDLFGVGLERYADGTLRWNNCLNWMKAGILYANRVSTVSPSYAHEIMTSQFGCNLDQILKMESGKVSGIVNGIDADLYNPQTDALLDYHFNQEDLSGKAKNKAKLQERVGLPVRADVPLVGIVSRLTRQKGFDVVVESLHHILQEDVQIVLLGTGDPAFEGAFSWFAQIYPDKLSANITFDVKLAQEIYAACDLFLMPSRFEPCGLSQMMAMRYGTLPLVHEVGGLRDTVRAFNPIEGSGTGFSFDNLSPYWLNWTFQTALDLYRNHPDIWRNLQKQAMESDFSWDTACKSYLDLYHSLVN.

K15 contributes to the ADP-alpha-D-glucose binding site.

This sequence belongs to the glycosyltransferase 1 family. Bacterial/plant glycogen synthase subfamily.

It carries out the reaction [(1-&gt;4)-alpha-D-glucosyl](n) + ADP-alpha-D-glucose = [(1-&gt;4)-alpha-D-glucosyl](n+1) + ADP + H(+). The protein operates within glycan biosynthesis; glycogen biosynthesis. Synthesizes alpha-1,4-glucan chains using ADP-glucose. The sequence is that of Glycogen synthase from Streptococcus pneumoniae (strain JJA).